The following is a 135-amino-acid chain: Cytochrome b5 (135 aa).

Residues 4–80 (SKVYSLAEVS…MDEMCVGDID (77 aa)) form the Cytochrome b5 heme-binding domain. Heme is bound by residues histidine 39 and histidine 63. Residues 106-126 (FIIKLLQFLVPLIILGVAVGI) traverse the membrane as a helical segment.

It belongs to the cytochrome b5 family.

The protein localises to the endoplasmic reticulum membrane. It localises to the microsome membrane. In terms of biological role, membrane bound hemoprotein which function as an electron carrier for several membrane bound oxygenases. This chain is Cytochrome b5, found in Cuscuta reflexa (Southern Asian dodder).